The chain runs to 310 residues: Probable RuBisCO transcriptional regulator (310 aa).

Residues Phe6–Thr63 form the HTH lysR-type domain. Positions Phe23–Gln42 form a DNA-binding region, H-T-H motif.

This sequence belongs to the LysR transcriptional regulatory family.

It localises to the plastid. The protein resides in the chloroplast. Its function is as follows. Trans-acting transcriptional regulator of RuBisCO genes (rbcL and rbcS) expression. This Guillardia theta (Cryptophyte) protein is Probable RuBisCO transcriptional regulator (rbcR).